The following is a 1270-amino-acid chain: Microtubule-associated tumor suppressor 1 (1270 aa).

The segment covering 1-14 (MTDDNSDDKIEDEL) has biased composition (acidic residues). Disordered regions lie at residues 1-50 (MTDD…NSAN) and 184-236 (FHTA…VTPS). Over residues 38–50 (NSSASSVNWNSAN) the composition is skewed to low complexity. Thr186 carries the phosphothreonine modification. Residues 197-211 (SGSTSSLSYSTWTSS) are compositionally biased toward low complexity. Positions 212 to 228 (HSDKTHARETTYDRESF) are enriched in basic and acidic residues. Phosphoserine is present on residues Ser381, Ser399, and Ser443. Disordered stretches follow at residues 524–560 (DAAL…PRSD) and 592–622 (THSK…SSSN). Over residues 533–556 (RPQQTSASSPSSVNSRQQTVLSRT) the composition is skewed to polar residues. At Ser629 the chain carries Phosphoserine. Composition is skewed to polar residues over residues 701 to 710 (SKTTTTSGRN), 759 to 776 (VSSS…SSWV), and 797 to 815 (TGST…TYSN). Residues 701–815 (SKTTTTSGRN…THSELSTYSN (115 aa)) form a disordered region. Positions 940 to 1231 (IQHLLSEREE…RLSMENEELL (292 aa)) form a coiled coil. 8 positions are modified to phosphoserine: Ser1203, Ser1224, Ser1245, Ser1255, Ser1259, Ser1261, Ser1264, and Ser1268. The disordered stretch occupies residues 1237-1270 (GDLCSPKRSPTSSAIPLQSPRNSGSFPSPSISPR). The segment covering 1244-1270 (RSPTSSAIPLQSPRNSGSFPSPSISPR) has biased composition (polar residues).

It belongs to the MTUS1 family. As to quaternary structure, homodimer. Interacts with AGTR2. Interacts with PTPN6. Isoform 1 associates with microtubules. In terms of tissue distribution, ubiquitously expressed (at protein level). Highly expressed in brain. Down-regulated in ovarian carcinoma, pancreas carcinoma, colon carcinoma and head and neck squamous cell carcinoma (HNSCC). Isoform 1 is the major isoform in most peripheral tissues. Isoform 2 is abundant in most peripheral tissues. Isoform 3 is the major isoform in brain, female reproductive tissues, thyroid and heart. Within brain it is highly expressed in corpus callosum and pons. Isoform 6 is brain-specific, it is the major isoform in cerebellum and fetal brain.

The protein resides in the mitochondrion. The protein localises to the golgi apparatus. Its subcellular location is the cell membrane. It localises to the nucleus. It is found in the cytoplasm. The protein resides in the cytoskeleton. The protein localises to the microtubule organizing center. Its subcellular location is the centrosome. It localises to the spindle. Cooperates with AGTR2 to inhibit ERK2 activation and cell proliferation. May be required for AGTR2 cell surface expression. Together with PTPN6, induces UBE2V2 expression upon angiotensin-II stimulation. Isoform 1 inhibits breast cancer cell proliferation, delays the progression of mitosis by prolonging metaphase and reduces tumor growth. This is Microtubule-associated tumor suppressor 1 (MTUS1) from Homo sapiens (Human).